A 495-amino-acid polypeptide reads, in one-letter code: GTPase Der (495 aa).

The region spanning 3–178 (AKIALVGRPN…EMRDLLPEED (176 aa)) is the EngA-type G 1 domain. GTP contacts are provided by residues 9 to 16 (GRPNVGKS), 57 to 61 (DTGGI), and 130 to 133 (NKVD). The disordered stretch occupies residues 190–227 (TAVASADADVDADVETEGGTSASETEEGITEETVEDEP). Over residues 213–227 (ETEEGITEETVEDEP) the composition is skewed to acidic residues. In terms of domain architecture, EngA-type G 2 spans 231 to 404 (LRLCMLGRPN…LAARIRRECS (174 aa)). GTP contacts are provided by residues 237-244 (GRPNAGKS), 284-288 (DTAGV), and 349-352 (NKMD). The 85-residue stretch at 405–489 (VRIPTGQLNR…PMRVHFRSSH (85 aa)) folds into the KH-like domain.

It belongs to the TRAFAC class TrmE-Era-EngA-EngB-Septin-like GTPase superfamily. EngA (Der) GTPase family. As to quaternary structure, associates with the 50S ribosomal subunit.

In terms of biological role, GTPase that plays an essential role in the late steps of ribosome biogenesis. The protein is GTPase Der of Nitratidesulfovibrio vulgaris (strain DP4) (Desulfovibrio vulgaris).